A 380-amino-acid polypeptide reads, in one-letter code: 1-deoxy-D-xylulose 5-phosphate reductoisomerase (380 aa).

Positions 9, 10, 11, 12, 36, and 117 each coordinate NADPH. K118 is a 1-deoxy-D-xylulose 5-phosphate binding site. An NADPH-binding site is contributed by E119. D139 serves as a coordination point for Mn(2+). Positions 140, 141, 165, and 188 each coordinate 1-deoxy-D-xylulose 5-phosphate. E141 is a Mn(2+) binding site. G194 contacts NADPH. 4 residues coordinate 1-deoxy-D-xylulose 5-phosphate: S201, N206, K207, and E210. E210 contributes to the Mn(2+) binding site.

The protein belongs to the DXR family. Mg(2+) is required as a cofactor. Requires Mn(2+) as cofactor.

It carries out the reaction 2-C-methyl-D-erythritol 4-phosphate + NADP(+) = 1-deoxy-D-xylulose 5-phosphate + NADPH + H(+). The protein operates within isoprenoid biosynthesis; isopentenyl diphosphate biosynthesis via DXP pathway; isopentenyl diphosphate from 1-deoxy-D-xylulose 5-phosphate: step 1/6. Catalyzes the NADPH-dependent rearrangement and reduction of 1-deoxy-D-xylulose-5-phosphate (DXP) to 2-C-methyl-D-erythritol 4-phosphate (MEP). This Aquifex aeolicus (strain VF5) protein is 1-deoxy-D-xylulose 5-phosphate reductoisomerase.